We begin with the raw amino-acid sequence, 210 residues long: 3-hexulose-6-phosphate synthase (210 aa).

It belongs to the HPS/KGPDC family. HPS subfamily.

The catalysed reaction is D-ribulose 5-phosphate + formaldehyde = D-arabino-hex-3-ulose 6-phosphate. The protein operates within one-carbon metabolism; formaldehyde assimilation via RuMP pathway; D-fructose 6-phosphate from D-ribulose 5-phosphate and formaldehyde: step 1/2. Catalyzes the condensation of ribulose 5-phosphate with formaldehyde to form 3-hexulose 6-phosphate. The chain is 3-hexulose-6-phosphate synthase from Staphylococcus aureus (strain NCTC 8325 / PS 47).